Here is a 61-residue protein sequence, read N- to C-terminus: Large ribosomal subunit protein uL30 (61 aa).

It belongs to the universal ribosomal protein uL30 family. Part of the 50S ribosomal subunit.

This chain is Large ribosomal subunit protein uL30, found in Thermobifida fusca (strain YX).